A 541-amino-acid polypeptide reads, in one-letter code: Imidazole glycerol phosphate synthase hisHF (541 aa).

The region spanning 2–214 (IVSIVDYGSG…LTGNYEQPIS (213 aa)) is the Glutamine amidotransferase type-1 domain. Catalysis depends on for GATase activity residues cysteine 80, histidine 189, and glutamate 191. The tract at residues 228–541 (LTKRIIACLD…LAIHDVLVRT (314 aa)) is cyclase. Residues aspartate 237 and aspartate 396 contribute to the active site.

The protein in the C-terminal section; belongs to the HisA/HisF family.

The catalysed reaction is 5-[(5-phospho-1-deoxy-D-ribulos-1-ylimino)methylamino]-1-(5-phospho-beta-D-ribosyl)imidazole-4-carboxamide + L-glutamine = D-erythro-1-(imidazol-4-yl)glycerol 3-phosphate + 5-amino-1-(5-phospho-beta-D-ribosyl)imidazole-4-carboxamide + L-glutamate + H(+). It carries out the reaction L-glutamine + H2O = L-glutamate + NH4(+). Its pathway is amino-acid biosynthesis; L-histidine biosynthesis; L-histidine from 5-phospho-alpha-D-ribose 1-diphosphate: step 5/9. Functionally, IGPS catalyzes the conversion of PRFAR and glutamine to IGP, AICAR and glutamate. The glutaminase domain produces the ammonia necessary for the cyclase domain to produce IGP and AICAR from PRFAR. The ammonia is channeled to the active site of the cyclase domain. The chain is Imidazole glycerol phosphate synthase hisHF (his4) from Schizosaccharomyces pombe (strain 972 / ATCC 24843) (Fission yeast).